We begin with the raw amino-acid sequence, 1021 residues long: MGKGVGRDKYEPAAVSEHGDKKKAKKERDMDELKKEVSMDDHKLSLDELHRKYGTDLNRGLTTARAAEILARDGPNALTPPPTTPEWVKFCRQLFGGFSMLLWIGAVLCFLAYGIQAATEEEPQNDNLYLGVVLSAVVIITGCFSYYQEAKSSKIMESFKNMVPQQALVIRNGEKMSINAEEVVVGDLVEVKGGDRIPADLRIISANGCKVDNSSLTGESEPQTRSPDFTNENPLETRNIAFFSTNCVEGTARGIVVYTGDRTVMGRIATLASGLEGGQTPIAAEIEHFIHIITGVAVFLGVSFFILSLILEYTWLEAVIFLIGIIVANVPEGLLATVTVCLTLTAKRMARKNCLVKNLEAVETLGSTSTICSDKTGTLTQNRMTVAHMWFDNQIHEADTTENQSGVSFDKTSATWLALSRIAGLCNRAVFQANQDNLPILKRAVAGDASESALLKCIEVCCGSVKEMRERYAKIVEIPFNSTNKYQLSIHKNANAGEPRHLLVMKGAPERILDRCSSILIHGKEQPLDEELKDAFQNAYLELGGLGERVLGFCHLMLPDEQFPEGFQFDTDDVNFPVDNLCFVGLISMIDPPRAAVPDAVGKCRSAGIKVIMVTGDHPITAKAIAKGVGIISEGNETVEDIAARLNIPVSQVNPRDARACVVHGSDLKDMTPEQLDDILKYHTEIVFARTSPQQKLIIVEGCQRQGAIVAVTGDGVNDSPALKKADIGVAMGIAGSDVSKQAADMILLDDNFASIVTGVEEGRLIFDNLKKSIAYTLTSNIPEITPFLIFIIANIPLPLGTVTILCIDLGTDMVPAISLAYEQAESDIMKRQPRNPQTDKLVNERLISMAYGQIGMIQALGGFFTYFVIMAENGFLPNHLLGIRVTWDDRWINDVEDSYGQQWTYEQRKIVEFTCHTAFFVSIVVVQWADLVICKTRRNSVFQQGMKNKILIFGLFEETALAAFLSYCPGMGVALRMYPLKPTWWFCAFPYSLLIFVYDEVRKLIIRRRPGGWVEKETYY.

Positions 1-5 (MGKGV) are excised as a propeptide. The span at 1–11 (MGKGVGRDKYE) shows a compositional bias: basic and acidic residues. Positions 1-36 (MGKGVGRDKYEPAAVSEHGDKKKAKKERDMDELKKE) are disordered. Residues 6-85 (GRDKYEPAAV…NALTPPPTTP (80 aa)) lie on the Cytoplasmic side of the membrane. At K9 the chain carries N6-acetyllysine. Y10 carries the post-translational modification Phosphotyrosine. A Phosphoserine; by PKC modification is found at S16. N6-acetyllysine is present on K21. Over residues 26–36 (KERDMDELKKE) the composition is skewed to basic and acidic residues. Phosphoserine occurs at positions 38 and 45. The segment at 80 to 82 (PPP) is phosphoinositide-3 kinase binding. The helical transmembrane segment at 86-106 (EWVKFCRQLFGGFSMLLWIGA) threads the bilayer. Residues 107–129 (VLCFLAYGIQAATEEEPQNDNLY) are Extracellular-facing. A helical transmembrane segment spans residues 130–150 (LGVVLSAVVIITGCFSYYQEA). Residues 151–286 (KSSKIMESFK…GGQTPIAAEI (136 aa)) lie on the Cytoplasmic side of the membrane. A Phosphoserine modification is found at S226. At Y258 the chain carries Phosphotyrosine. A helical membrane pass occupies residues 287 to 306 (EHFIHIITGVAVFLGVSFFI). The Extracellular portion of the chain corresponds to 307–318 (LSLILEYTWLEA). A helical transmembrane segment spans residues 319-336 (VIFLIGIIVANVPEGLLA). Residues 337-770 (TVTVCLTLTA…EEGRLIFDNL (434 aa)) are Cytoplasmic-facing. D374 (4-aspartylphosphate intermediate) is an active-site residue. Residues S450 and S482 each carry the phosphoserine modification. Position 485 (K485) interacts with ATP. A Phosphotyrosine modification is found at Y540. Residues 594-715 (RAAVPDAVGK…QGAIVAVTGD (122 aa)) form a mediates interaction with SCN7A region. A Phosphoserine modification is found at S666. Residues D715 and D719 each contribute to the Mg(2+) site. A helical membrane pass occupies residues 771–790 (KKSIAYTLTSNIPEITPFLI). The Extracellular segment spans residues 791-800 (FIIANIPLPL). A helical transmembrane segment spans residues 801–821 (GTVTILCIDLGTDMVPAISLA). Residues 822–841 (YEQAESDIMKRQPRNPQTDK) lie on the Cytoplasmic side of the membrane. Residues 842–864 (LVNERLISMAYGQIGMIQALGGF) form a helical membrane-spanning segment. At 865–916 (FTYFVIMAENGFLPNHLLGIRVTWDDRWINDVEDSYGQQWTYEQRKIVEFTC) the chain is on the extracellular side. The chain crosses the membrane as a helical span at residues 917–936 (HTAFFVSIVVVQWADLVICK). At 937–949 (TRRNSVFQQGMKN) the chain is on the cytoplasmic side. Position 941 is a phosphoserine; by PKA (S941). The chain crosses the membrane as a helical span at residues 950–968 (KILIFGLFEETALAAFLSY). The Extracellular portion of the chain corresponds to 969-983 (CPGMGVALRMYPLKP). The chain crosses the membrane as a helical span at residues 984 to 1004 (TWWFCAFPYSLLIFVYDEVRK). Residues 1005–1021 (LIIRRRPGGWVEKETYY) are Cytoplasmic-facing.

Belongs to the cation transport ATPase (P-type) (TC 3.A.3) family. Type IIC subfamily. As to quaternary structure, the sodium/potassium-transporting ATPase is composed of a catalytic alpha subunit, an auxiliary non-catalytic beta subunit and an additional regulatory subunit. Interacts with regulatory subunit FXYD1. Interacts with regulatory subunit FXYD3. Interacts with SIK1. Interacts with SLC35G1 and STIM1. Interacts with CLN3; this interaction regulates the sodium/potassium-transporting ATPase complex localization at the plasma membrane. Interacts with SCN7A; activates ATP1A1 P-type sodium:potassium-exchanging transporter activity which indirectly signals to nearby neurons to regulate sodium homeostasis. Post-translationally, phosphorylation on Tyr-10 modulates pumping activity. Phosphorylation of Ser-941 by PKA modulates the response of ATP1A1 to PKC. Dephosphorylation by protein phosphatase 2A (PP2A) following increases in intracellular sodium, leading to increase catalytic activity.

The protein localises to the cell membrane. It is found in the basolateral cell membrane. Its subcellular location is the sarcolemma. It localises to the cell projection. The protein resides in the axon. The protein localises to the melanosome. It catalyses the reaction K(+)(out) + Na(+)(in) + ATP + H2O = K(+)(in) + Na(+)(out) + ADP + phosphate + H(+). Its activity is regulated as follows. Specifically inhibited by cardiac glycosides such as digoxin or ouabain. In terms of biological role, this is the catalytic component of the active enzyme, which catalyzes the hydrolysis of ATP coupled with the exchange of sodium and potassium ions across the plasma membrane. This action creates the electrochemical gradient of sodium and potassium ions, providing the energy for active transport of various nutrients. Could also be part of an osmosensory signaling pathway that senses body-fluid sodium levels and controls salt intake behavior as well as voluntary water intake to regulate sodium homeostasis. The sequence is that of Sodium/potassium-transporting ATPase subunit alpha-1 (ATP1A1) from Ovis aries (Sheep).